A 550-amino-acid polypeptide reads, in one-letter code: MCGIICFIQYGGQKIDLVSCLNCLDKLNNRGPDAQSYQVIELGDITIFLGFTRLAIMDTSEAGLQPFKDNNSNYSICNGEIYNYKNLAEKFNIEMQSQCDCEILLPLFNLRGFEGLLSDLDAEFATVIVDKYNSKLYAARDKYGVRPLYYGYNCEKGLIGFASELKALHSVMEYVEQVKPNQYVTIDLSFRPSIPFDLQNFVKLFQFTNYHEYYQSHKSLIDYHEPNIEQLQTSINHLLTEAVRKRLYADRQIGFLLSGGLDSSLIVAIATRLLGPTNIVCFSVGFEGSPDVAAAREVVKFLGIKNHHIVPFSVDIGLNAINDVIKTIETYDITTIRASTPQFIMAKYIQENTDIRVLLSGEGSDEIHGSYKYMRSAPNSQEFHKETIRLLEELYLFDNKRTDRTMAGNGLEVRVPFLDFNYVDFIMNIDPNLLMYKSDYIEKKIIRDAFKGYLPENILYRPKEAFSDAVSSKEINWYRSIQKITEEIYTDEKLQNSNYKFNKPEIKEALYYRDIFNSHYGGRDHIIPHYWLPRFQQNNVLDPSATILPI.

Residue cysteine 2 is the For GATase activity of the active site. Residues cysteine 2–serine 189 form the Glutamine amidotransferase type-2 domain. Residues arginine 53 to methionine 57, asparagine 78 to glutamate 80, and aspartate 100 each bind L-glutamine. The 318-residue stretch at tyrosine 213–tyrosine 530 folds into the Asparagine synthetase domain. ATP is bound by residues leucine 256, valine 284, and serine 360–glycine 361.

The enzyme catalyses L-aspartate + L-glutamine + ATP + H2O = L-asparagine + L-glutamate + AMP + diphosphate + H(+). It participates in amino-acid biosynthesis; L-asparagine biosynthesis; L-asparagine from L-aspartate (L-Gln route): step 1/1. In Acanthamoeba polyphaga mimivirus (APMV), this protein is Probable asparagine synthetase [glutamine-hydrolyzing].